Reading from the N-terminus, the 78-residue chain is Small ribosomal subunit protein bS20 (78 aa).

It belongs to the bacterial ribosomal protein bS20 family.

Its function is as follows. Binds directly to 16S ribosomal RNA. The chain is Small ribosomal subunit protein bS20 from Streptococcus pneumoniae serotype 2 (strain D39 / NCTC 7466).